Here is a 677-residue protein sequence, read N- to C-terminus: Methionine--tRNA ligase (677 aa).

The 'HIGH' region signature appears at 15 to 25 (PYANGSIHLGH). Zn(2+) contacts are provided by Cys-146, Cys-149, Cys-159, and Cys-162. The 'KMSKS' region signature appears at 333–337 (KMSKS). Lys-336 contacts ATP. The tRNA-binding domain maps to 575-677 (DFAKVDLRVA…AGAKPGHQVK (103 aa)).

This sequence belongs to the class-I aminoacyl-tRNA synthetase family. MetG type 1 subfamily. In terms of assembly, homodimer. It depends on Zn(2+) as a cofactor.

The protein resides in the cytoplasm. It catalyses the reaction tRNA(Met) + L-methionine + ATP = L-methionyl-tRNA(Met) + AMP + diphosphate. Functionally, is required not only for elongation of protein synthesis but also for the initiation of all mRNA translation through initiator tRNA(fMet) aminoacylation. The sequence is that of Methionine--tRNA ligase from Escherichia coli (strain SE11).